The primary structure comprises 278 residues: Cysteine-rich repeat secretory protein 18 (278 aa).

Residues 1 to 32 form the signal peptide; that stretch reads MYSSSSVSKRFVLVPIVVVVTTQLLLVRNVSS. 2 consecutive Gnk2-homologous domains span residues 39–147 and 160–267; these read YLHH…SLDT and PSAK…LYPF.

Belongs to the cysteine-rich repeat secretory protein family.

The protein resides in the secreted. The polypeptide is Cysteine-rich repeat secretory protein 18 (CRRSP18) (Arabidopsis thaliana (Mouse-ear cress)).